We begin with the raw amino-acid sequence, 150 residues long: D-aminoacyl-tRNA deacylase (150 aa).

The Gly-cisPro motif, important for rejection of L-amino acids signature appears at 136-137; the sequence is GP.

The protein belongs to the DTD family. As to quaternary structure, homodimer.

It is found in the cytoplasm. It catalyses the reaction glycyl-tRNA(Ala) + H2O = tRNA(Ala) + glycine + H(+). The enzyme catalyses a D-aminoacyl-tRNA + H2O = a tRNA + a D-alpha-amino acid + H(+). Its function is as follows. An aminoacyl-tRNA editing enzyme that deacylates mischarged D-aminoacyl-tRNAs. Also deacylates mischarged glycyl-tRNA(Ala), protecting cells against glycine mischarging by AlaRS. Acts via tRNA-based rather than protein-based catalysis; rejects L-amino acids rather than detecting D-amino acids in the active site. By recycling D-aminoacyl-tRNA to D-amino acids and free tRNA molecules, this enzyme counteracts the toxicity associated with the formation of D-aminoacyl-tRNA entities in vivo and helps enforce protein L-homochirality. This chain is D-aminoacyl-tRNA deacylase, found in Staphylococcus aureus (strain MRSA252).